We begin with the raw amino-acid sequence, 1059 residues long: Protein cappuccino (1059 aa).

2 stretches are compositionally biased toward polar residues: residues Ala-62–Gly-80 and Ala-90–Ser-123. Disordered stretches follow at residues Ala-62–Thr-146 and Gln-448–Pro-647. The span at Leu-133–Phe-142 shows a compositional bias: pro residues. Residues Ser-468 to His-481 show a composition bias toward basic and acidic residues. In terms of domain architecture, FH1 spans Pro-480–Ser-560. A compositionally biased stretch (pro residues) spans Val-483–Pro-541. Residues Arg-585–Ser-1032 form the FH2 domain. Residues Thr-620–Ser-629 show a composition bias toward polar residues. Residues Lys-1049–Asn-1059 form an important for interaction with spir region.

Belongs to the formin homology family. Cappuccino subfamily. Interacts with wash. Interacts with spir.

The protein localises to the cytoplasm. It localises to the cytoskeleton. Its subcellular location is the cytosol. It is found in the membrane. The protein resides in the cytoplasmic vesicle membrane. In terms of biological role, acts as an actin nucleation factor and promotes assembly of actin filaments together with spir. May play a role in intracellular vesicle transport along actin fibers, providing a novel link between actin cytoskeleton dynamics and intracellular transport. This chain is Protein cappuccino (capu), found in Drosophila melanogaster (Fruit fly).